The sequence spans 242 residues: Host range factor p28 (242 aa).

The region spanning 21 to 131 (YIDEPNDIRL…QSILRGLVNW (111 aa)) is the KilA-N domain. The segment at 173-226 (CGICYEVVYSKRLENDRYFGLLDSCNHIFCITCINIWHRTRRETGALDNCPICR) adopts an RING-type zinc-finger fold.

It belongs to the orthopoxvirus OPG021 family.

It is found in the host cytoplasm. The catalysed reaction is S-ubiquitinyl-[E2 ubiquitin-conjugating enzyme]-L-cysteine + [acceptor protein]-L-lysine = [E2 ubiquitin-conjugating enzyme]-L-cysteine + N(6)-ubiquitinyl-[acceptor protein]-L-lysine.. Its function is as follows. RING-finger E3 ubiquitin ligase which catalyzes the formation of both 'Lys-48'- and 'Lys-63'-linked polyubiquitin chains. Plays an important role in virulence by acting as an anti-apoptotic factor. The protein is Host range factor p28 (OPG021) of Cynomys gunnisoni (Gunnison's prairie dog).